The primary structure comprises 298 residues: S-adenosylmethionine-dependent nucleotide dehydratase (298 aa).

In terms of domain architecture, Radical SAM core spans 8–235; it reads ANKELVVNWH…QRFGEIIYAE (228 aa). [4Fe-4S] cluster is bound by residues cysteine 22, cysteine 26, and cysteine 29.

The protein belongs to the radical SAM superfamily. Viperin family. [4Fe-4S] cluster serves as cofactor.

It catalyses the reaction CTP + AH2 + S-adenosyl-L-methionine = 3'-deoxy-3',4'-didehydro-CTP + 5'-deoxyadenosine + L-methionine + A + H2O + H(+). The catalysed reaction is UTP + AH2 + S-adenosyl-L-methionine = 3'-deoxy-3',4'-didehydro-UTP + 5'-deoxyadenosine + L-methionine + A + H2O + H(+). Functionally, expression of pVip8 in E.coli (strain MG1655) confers resistance to phages lambda, P1, SECphi8 and T7. Prevents culture collapse upon infection with T7. Catalyzes the conversion of cytidine triphosphate (CTP) to 3'-deoxy-3',4'-didehydro-CTP (ddhCTP) and uridine triphosphate (UTP) to 3'-deoxy-3',4'-didehydro-UTP (ddhUTP), probably via a SAM-dependent radical mechanism. The modified nucleotides repress transcription from T7 RNA polymerase-directed genes (possibly by acting as chain terminators), strongly suggesting these nucleotides block viral polymerase transcription. This is S-adenosylmethionine-dependent nucleotide dehydratase from Psychrobacter lutiphocae (strain DSM 21542 / CCUG 56590 / IMMIB L-1110).